We begin with the raw amino-acid sequence, 334 residues long: Cell division protein ZipA (334 aa).

Residues 1-2 lie on the Periplasmic side of the membrane; sequence ME. A helical membrane pass occupies residues 3-23; sequence LHIIFLILGGLLIVLLAGFSI. The Cytoplasmic segment spans residues 24–334; the sequence is YSARREKSRI…DRQAYFARVS (311 aa).

The protein belongs to the ZipA family. As to quaternary structure, interacts with FtsZ via their C-terminal domains.

It localises to the cell inner membrane. Functionally, essential cell division protein that stabilizes the FtsZ protofilaments by cross-linking them and that serves as a cytoplasmic membrane anchor for the Z ring. Also required for the recruitment to the septal ring of downstream cell division proteins. In Haemophilus ducreyi (strain 35000HP / ATCC 700724), this protein is Cell division protein ZipA.